The primary structure comprises 697 residues: Histone deacetylase HOS3 (697 aa).

The interval 40–440 (AKAVVVLSPY…LIGLQNQDWV (401 aa)) is histone deacetylase. Residue H196 is part of the active site. Residues 525 to 573 (IRSHRSNASPEKELHENKPRSTEKQEQREIRSDTKVKQLSSNNRAAETQ) are disordered. Positions 534-560 (PEKELHENKPRSTEKQEQREIRSDTKV) are enriched in basic and acidic residues. The segment covering 561 to 573 (KQLSSNNRAAETQ) has biased composition (polar residues). 4 positions are modified to phosphoserine: S582, S583, S613, and S629. A compositionally biased stretch (basic and acidic residues) spans 625 to 638 (GDEDSDHELKEKNW). Residues 625-697 (GDEDSDHELK…KHTTRSGGRW (73 aa)) form a disordered region. Residues 665–674 (QPQNANTPTY) show a composition bias toward polar residues.

Belongs to the histone deacetylase family. HD type 1 subfamily. In terms of assembly, homodimer.

Its subcellular location is the nucleus. The catalysed reaction is N(6)-acetyl-L-lysyl-[histone] + H2O = L-lysyl-[histone] + acetate. Functionally, responsible for the deacetylation of lysine residues on the N-terminal part of the core histones (H2A, H2B, H3 and H4). Histone deacetylation gives a tag for epigenetic repression and plays an important role in transcriptional regulation, cell cycle progression and developmental events. Histone deacetylases act via the formation of large multiprotein complexes. In Saccharomyces cerevisiae (strain ATCC 204508 / S288c) (Baker's yeast), this protein is Histone deacetylase HOS3 (HOS3).